Here is a 396-residue protein sequence, read N- to C-terminus: KiSS-1 receptor (396 aa).

Residues 1–46 (MAAEATLGPNVSWWAPSNASGCPGCGVNASDGPGSAPRPLDAWLVP) lie on the Extracellular side of the membrane. Asn10, Asn18, and Asn28 each carry an N-linked (GlcNAc...) asparagine glycan. The helical transmembrane segment at 47-67 (LFFAALMLLGLVGNSLVIFVI) threads the bilayer. The Cytoplasmic portion of the chain corresponds to 68–90 (CRHKHMQTVTNFYIANLAATDVT). A helical membrane pass occupies residues 91-111 (FLLCCVPFTALLYPLPTWVLG). Residues 112–120 (DFMCKFVNY) are Extracellular-facing. Residues Cys115 and Cys191 are joined by a disulfide bond. A helical transmembrane segment spans residues 121-138 (IQQVSVQATCATLTAMSV). Residues 139–159 (DRWYVTVFPLRALHRRTPRLA) are Cytoplasmic-facing. Residues 160–180 (LTVSLSIWVGSAAVSAPVLAL) traverse the membrane as a helical segment. Residues 181–202 (HRLSPGPHTYCSEAFPSRALER) are Extracellular-facing. Residues 203 to 223 (AFALYNLLALYLLPLLATCAC) traverse the membrane as a helical segment. At 224-264 (YGAMLRHLGRAAVRPAPTDGALQGQLLAQRAGAVRTKVSRL) the chain is on the cytoplasmic side. The chain crosses the membrane as a helical span at residues 265 to 285 (VAAVVLLFAACWGPIQLFLVL). Residues 286-305 (QALGPSGAWHPRSYAAYALK) lie on the Extracellular side of the membrane. A helical membrane pass occupies residues 306–326 (IWAHCMSYSNSALNPLLYAFL). Over 327 to 396 (GSHFRQAFCR…SVQDEHTAPL (70 aa)) the chain is Cytoplasmic. A disordered region spans residues 346 to 396 (RRPHASAHSDRAAPHSVPHSRAAHPVRVRTPEPGNPVRRSPSVQDEHTAPL).

It belongs to the G-protein coupled receptor 1 family. Highest expression levels in the cerebrum and cecum. Moderate expression in the ovary, colon and placenta. Low levels in the uterus, small intestine, and thymus. Expressed only moderately in the placenta. No expression in kidney tissues. Has a complex and abundant central nervous system expression pattern. Expressed in brain regions such as pons, midbrain, thalamus, hypothalamus, hippocampus, amygdala, cortex, frontal cortex, and striatum. No expression in the cerebellum. Persistent expression is detected in hypothalamus throughout postnatal development, with maximum expression levels at puberty in both male and female. Hypothalamic expression changed throughout the estrus cycle and is significantly increased after gonadectomy, a rise that is prevented by sex steroid replacement both in males and females.

The protein resides in the cell membrane. Receptor for metastin, a C-terminally amidated peptide of KiSS1. KiSS1 is a metastasis suppressor protein. Activation of the receptor inhibits cell proliferation and cell migration, key characteristics of tumor metastasis. The receptor is essential for normal gonadotropin-released hormone physiology and for puberty. The hypothalamic KiSS1/KISS1R system is a pivotal factor in central regulation of the gonadotropic axis at puberty and in adulthood. Analysis of the transduction pathways activated by the receptor identifies coupling to phospholipase C and intracellular calcium release through pertussis toxin-insensitive G(q) proteins. This is KiSS-1 receptor (Kiss1r) from Rattus norvegicus (Rat).